A 254-amino-acid polypeptide reads, in one-letter code: 5'-nucleotidase SurE (254 aa).

Residues Asp8, Asp9, Ser40, and Asn93 each contribute to the a divalent metal cation site.

The protein belongs to the SurE nucleotidase family. Requires a divalent metal cation as cofactor.

It is found in the cytoplasm. The catalysed reaction is a ribonucleoside 5'-phosphate + H2O = a ribonucleoside + phosphate. In terms of biological role, nucleotidase that shows phosphatase activity on nucleoside 5'-monophosphates. The polypeptide is 5'-nucleotidase SurE (Methylorubrum populi (strain ATCC BAA-705 / NCIMB 13946 / BJ001) (Methylobacterium populi)).